We begin with the raw amino-acid sequence, 143 residues long: Ponticulin (143 aa).

An N-terminal signal peptide occupies residues methionine 1–alanine 22. N-linked (GlcNAc...) asparagine glycosylation is present at asparagine 111. Serine 118 is lipidated: GPI-like-anchor amidated serine. Positions serine 119–phenylalanine 143 are cleaved as a propeptide — removed in mature form.

Belongs to the ponticulin family. As to quaternary structure, monomer. Post-translationally, disulfide bond(s) stabilize the native, actin-binding conformation of ponticulin. The GPI-like-anchor contains a phosphoceramide group, rather than a phosphatidyl group.

Its subcellular location is the cell membrane. Functionally, binds F-actin and nucleates actin assembly. Major high affinity link between the plasma membrane and the cortical actin network. In Dictyostelium discoideum (Social amoeba), this protein is Ponticulin (ponA).